Reading from the N-terminus, the 63-residue chain is Hyphancin-3G (63 aa).

Positions 1–22 are cleaved as a signal peptide; the sequence is MNFSRILFFMFACFVALASVSA. Residues 23–26 constitute a propeptide, removed by a dipeptidylpeptidase; it reads VPEP. A Leucine amide modification is found at leucine 61.

It belongs to the cecropin family.

It is found in the secreted. Has antibacterial activity. This is Hyphancin-3G from Hyphantria cunea (Fall webworm moth).